Consider the following 567-residue polypeptide: Proline--tRNA ligase (567 aa).

Belongs to the class-II aminoacyl-tRNA synthetase family. ProS type 1 subfamily. As to quaternary structure, homodimer.

The protein resides in the cytoplasm. The enzyme catalyses tRNA(Pro) + L-proline + ATP = L-prolyl-tRNA(Pro) + AMP + diphosphate. In terms of biological role, catalyzes the attachment of proline to tRNA(Pro) in a two-step reaction: proline is first activated by ATP to form Pro-AMP and then transferred to the acceptor end of tRNA(Pro). As ProRS can inadvertently accommodate and process non-cognate amino acids such as alanine and cysteine, to avoid such errors it has two additional distinct editing activities against alanine. One activity is designated as 'pretransfer' editing and involves the tRNA(Pro)-independent hydrolysis of activated Ala-AMP. The other activity is designated 'posttransfer' editing and involves deacylation of mischarged Ala-tRNA(Pro). The misacylated Cys-tRNA(Pro) is not edited by ProRS. This is Proline--tRNA ligase from Streptomyces coelicolor (strain ATCC BAA-471 / A3(2) / M145).